A 213-amino-acid polypeptide reads, in one-letter code: Chloramphenicol acetyltransferase 2 (213 aa).

The active-site Proton acceptor is His-189.

Belongs to the chloramphenicol acetyltransferase family. In terms of assembly, homotrimer.

It carries out the reaction chloramphenicol + acetyl-CoA = chloramphenicol 3-acetate + CoA. In terms of biological role, this enzyme is an effector of chloramphenicol resistance in bacteria. In Escherichia coli, this protein is Chloramphenicol acetyltransferase 2 (cmlA).